Consider the following 318-residue polypeptide: UPF0725 protein At3g44770 (318 aa).

This sequence belongs to the UPF0725 (EMB2204) family.

This chain is UPF0725 protein At3g44770, found in Arabidopsis thaliana (Mouse-ear cress).